The following is a 45-amino-acid chain: Large ribosomal subunit protein bL36 (45 aa).

The interval 1–45 is disordered; the sequence is MRVSSSIKADPSKGDKLVRRKGRLYVINKKDPNRKQRQAGPARKK.

It belongs to the bacterial ribosomal protein bL36 family.

The chain is Large ribosomal subunit protein bL36 from Chlamydia trachomatis serovar L2 (strain ATCC VR-902B / DSM 19102 / 434/Bu).